Here is a 477-residue protein sequence, read N- to C-terminus: RNA pseudouridine synthase 6, chloroplastic (477 aa).

Residues 1–52 (MPKAAASLASLLPQLWHRPVQPPPFLHRALSSSSPLLRRHRAALHSPAAPLS) constitute a chloroplast transit peptide. In terms of domain architecture, S4 RNA-binding spans 98–205 (EVAVDFISRS…FPRCYEIDWK (108 aa)). D258 is a catalytic residue.

Belongs to the pseudouridine synthase RluA family.

It localises to the plastid. The protein localises to the chloroplast. The enzyme catalyses a uridine in RNA = a pseudouridine in RNA. In Oryza sativa subsp. japonica (Rice), this protein is RNA pseudouridine synthase 6, chloroplastic.